Reading from the N-terminus, the 32-residue chain is Photosystem II reaction center protein Psb30 (32 aa).

Residues 3–23 (IVIVQLGSLALITLAGPIIIV) form a helical membrane-spanning segment.

Belongs to the Psb30/Ycf12 family. In terms of assembly, PSII is composed of 1 copy each of membrane proteins PsbA, PsbB, PsbC, PsbD, PsbE, PsbF, PsbH, PsbI, PsbJ, PsbK, PsbL, PsbM, PsbT, PsbY, PsbZ, Psb30/Ycf12, peripheral proteins of the oxygen-evolving complex and a large number of cofactors. It forms dimeric complexes.

Its subcellular location is the plastid. It is found in the chloroplast thylakoid membrane. In terms of biological role, a core subunit of photosystem II (PSII), probably helps stabilize the reaction center. This chain is Photosystem II reaction center protein Psb30, found in Euglena viridis (Cercaria viridis).